Here is a 498-residue protein sequence, read N- to C-terminus: Calcium uptake protein, mitochondrial (498 aa).

Residues 1–29 (MPALSHYRSVSSLPSVDRSFLLIQRLRIH) constitute a mitochondrion transit peptide. 4 consecutive EF-hand domains span residues 216–241 (EFFMLFDVDNDGLISFKEYIFFVTLL), 243–278 (IPESSFAVAFKMFDTDNNGEIDKEEFKTVMSLMRSQ), 329–364 (LTEEMLRLEFAHYDYKRRGSISAKDFALSMVAAADA), and 437–472 (LSDNVIEIAFHVFDSNQDGNLSVDEFLRVLHRRERD). Residues D222, D224, D226, E233, D256, D258, N260, E262, and E267 each coordinate Ca(2+). Residues D450, N452, D454, N456, and E461 each coordinate Ca(2+).

Belongs to the MICU1 family. MICU1 subfamily. As to expression, expressed in both green and non-green tissues, including roots, shoots, floral buds and pollen.

Its subcellular location is the mitochondrion inner membrane. The protein localises to the mitochondrion intermembrane space. Functionally, calcium-binding protein maintaining matrix calcium levels at low concentration. Regulates mitochondrial calcium dynamics in planta by restricting influx. The polypeptide is Calcium uptake protein, mitochondrial (Arabidopsis thaliana (Mouse-ear cress)).